The following is a 570-amino-acid chain: Sulfite reductase [NADPH] hemoprotein beta-component 1 (570 aa).

4 residues coordinate [4Fe-4S] cluster: Cys434, Cys440, Cys479, and Cys483. Cys483 is a siroheme binding site.

This sequence belongs to the nitrite and sulfite reductase 4Fe-4S domain family. Alpha(8)-beta(8). The alpha component is a flavoprotein, the beta component is a hemoprotein. Siroheme serves as cofactor. [4Fe-4S] cluster is required as a cofactor.

The enzyme catalyses hydrogen sulfide + 3 NADP(+) + 3 H2O = sulfite + 3 NADPH + 4 H(+). It functions in the pathway sulfur metabolism; hydrogen sulfide biosynthesis; hydrogen sulfide from sulfite (NADPH route): step 1/1. Its function is as follows. Component of the sulfite reductase complex that catalyzes the 6-electron reduction of sulfite to sulfide. This is one of several activities required for the biosynthesis of L-cysteine from sulfate. In Klebsiella pneumoniae (strain 342), this protein is Sulfite reductase [NADPH] hemoprotein beta-component 1.